A 592-amino-acid chain; its full sequence is Aspartate--tRNA(Asp/Asn) ligase (592 aa).

Glu182 serves as a coordination point for L-aspartate. The aspartate stretch occupies residues 206-209 (QIFK). Residue Arg228 coordinates L-aspartate. ATP-binding positions include 228–230 (RDE) and Gln237. His455 serves as a coordination point for L-aspartate. Residue Glu489 participates in ATP binding. Position 496 (Arg496) interacts with L-aspartate. 541 to 544 (GLDR) is an ATP binding site.

The protein belongs to the class-II aminoacyl-tRNA synthetase family. Type 1 subfamily. In terms of assembly, homodimer.

The protein localises to the cytoplasm. The enzyme catalyses tRNA(Asx) + L-aspartate + ATP = L-aspartyl-tRNA(Asx) + AMP + diphosphate. In terms of biological role, aspartyl-tRNA synthetase with relaxed tRNA specificity since it is able to aspartylate not only its cognate tRNA(Asp) but also tRNA(Asn). Reaction proceeds in two steps: L-aspartate is first activated by ATP to form Asp-AMP and then transferred to the acceptor end of tRNA(Asp/Asn). The chain is Aspartate--tRNA(Asp/Asn) ligase from Thermoanaerobacter pseudethanolicus (strain ATCC 33223 / 39E) (Clostridium thermohydrosulfuricum).